The chain runs to 145 residues: Large ribosomal subunit protein uL13 (145 aa).

Belongs to the universal ribosomal protein uL13 family. As to quaternary structure, part of the 50S ribosomal subunit.

Its function is as follows. This protein is one of the early assembly proteins of the 50S ribosomal subunit, although it is not seen to bind rRNA by itself. It is important during the early stages of 50S assembly. This chain is Large ribosomal subunit protein uL13, found in Listeria monocytogenes serotype 4b (strain CLIP80459).